The sequence spans 363 residues: DNA polymerase IV (363 aa).

The region spanning 14 to 197 (IIHIDMDAFF…LPVEKFHGVG (184 aa)) is the UmuC domain. Residues Asp18 and Asp115 each contribute to the Mg(2+) site. Glu116 is an active-site residue.

This sequence belongs to the DNA polymerase type-Y family. As to quaternary structure, monomer. Mg(2+) is required as a cofactor.

Its subcellular location is the cytoplasm. The enzyme catalyses DNA(n) + a 2'-deoxyribonucleoside 5'-triphosphate = DNA(n+1) + diphosphate. Functionally, poorly processive, error-prone DNA polymerase involved in untargeted mutagenesis. Copies undamaged DNA at stalled replication forks, which arise in vivo from mismatched or misaligned primer ends. These misaligned primers can be extended by PolIV. Exhibits no 3'-5' exonuclease (proofreading) activity. May be involved in translesional synthesis, in conjunction with the beta clamp from PolIII. The polypeptide is DNA polymerase IV (Lactococcus lactis subsp. lactis (strain IL1403) (Streptococcus lactis)).